We begin with the raw amino-acid sequence, 394 residues long: MSDGFGRPPPPAPAGHPTGAAGGDPVRVMVVDDSAVIRGLLTRALEGDTEIRVVASVGDGQMAVNALQRNSLDVIVLDIEMPVMDGLTAIPKLLAVAPQVKIIMASTLTLRGADISMRCLSAGAADYIPKPTSTREIGGADAFKRELVSKVKALGAAARRAGSRTRGELRPLNPVPAAFLKREPPPVTLRPAPAVGSVGQVKPDVIAIGSSTGGPQALFEVLAHLKTGVTQPILITQHMPATFTTILAEHITRQCGMNAQEAKDGEPVVPGRCYIAPGDFHMLVTQRAGANVISLTKDPPENFCRPAVDPMMRSILRAFGGRKVLACILTGMGQDGLKGCTEVVNAGGTLIAQDEASSVVWGMPGAVAQAGICSAVLPLKEIGPYIRKFASRAA.

The segment at 1 to 24 (MSDGFGRPPPPAPAGHPTGAAGGD) is disordered. Residues 15–24 (GHPTGAAGGD) show a composition bias toward low complexity. Residues 27-145 (RVMVVDDSAV…EIGGADAFKR (119 aa)) enclose the Response regulatory domain. A 4-aspartylphosphate modification is found at Asp78. In terms of domain architecture, CheB-type methylesterase spans 191–393 (PAPAVGSVGQ…PYIRKFASRA (203 aa)). Active-site residues include Ser211, His238, and Asp335.

The protein belongs to the CheB family. Phosphorylated by CheA. Phosphorylation of the N-terminal regulatory domain activates the methylesterase activity.

It is found in the cytoplasm. The catalysed reaction is [protein]-L-glutamate 5-O-methyl ester + H2O = L-glutamyl-[protein] + methanol + H(+). The enzyme catalyses L-glutaminyl-[protein] + H2O = L-glutamyl-[protein] + NH4(+). In terms of biological role, involved in chemotaxis. Part of a chemotaxis signal transduction system that modulates chemotaxis in response to various stimuli. Catalyzes the demethylation of specific methylglutamate residues introduced into the chemoreceptors (methyl-accepting chemotaxis proteins or MCP) by CheR. Also mediates the irreversible deamidation of specific glutamine residues to glutamic acid. In Azospirillum brasilense, this protein is Protein-glutamate methylesterase/protein-glutamine glutaminase.